The sequence spans 503 residues: Galactose/methyl galactoside import ATP-binding protein MglA 2 (503 aa).

ABC transporter domains are found at residues 11 to 246 (LEMT…VGRE) and 257 to 503 (TPKE…SRYL). 43-50 (GENGAGKS) provides a ligand contact to ATP.

Belongs to the ABC transporter superfamily. Galactose/methyl galactoside importer (TC 3.A.1.2.3) family. The complex is composed of one ATP-binding protein (MglA), two transmembrane proteins (MglC) and a solute-binding protein (MglB).

It is found in the cell inner membrane. The enzyme catalyses D-galactose(out) + ATP + H2O = D-galactose(in) + ADP + phosphate + H(+). It catalyses the reaction methyl beta-D-galactoside(out) + ATP + H2O = methyl beta-D-galactoside(in) + ADP + phosphate + H(+). Its function is as follows. Part of the ABC transporter complex MglABC involved in galactose/methyl galactoside import. Responsible for energy coupling to the transport system. The sequence is that of Galactose/methyl galactoside import ATP-binding protein MglA 2 from Photobacterium profundum (strain SS9).